A 152-amino-acid chain; its full sequence is Acidic phospholipase A2 S17-58 (152 aa).

The N-terminal stretch at 1–19 (MYPAHLLVLLAVCVSLLGA) is a signal peptide. Positions 20 to 27 (SNIPLPSL) are excised as a propeptide. 7 disulfide bridges follow: Cys38/Cys104, Cys54/Cys151, Cys56/Cys72, Cys71/Cys132, Cys78/Cys125, Cys88/Cys118, and Cys111/Cys123. Ca(2+)-binding residues include Tyr55, Gly57, and Gly59. Residue His75 is part of the active site. Residue Asp76 participates in Ca(2+) binding. Asp126 is an active-site residue.

This sequence belongs to the phospholipase A2 family. Group I subfamily. D49 sub-subfamily. Requires Ca(2+) as cofactor. Expressed by the venom gland.

The protein localises to the secreted. The catalysed reaction is a 1,2-diacyl-sn-glycero-3-phosphocholine + H2O = a 1-acyl-sn-glycero-3-phosphocholine + a fatty acid + H(+). In terms of biological role, snake venom phospholipase A2 (PLA2) that inhibits collagen-induced platelet aggregation. PLA2 catalyzes the calcium-dependent hydrolysis of the 2-acyl groups in 3-sn-phosphoglycerides. The polypeptide is Acidic phospholipase A2 S17-58 (Austrelaps superbus (Lowland copperhead snake)).